A 113-amino-acid polypeptide reads, in one-letter code: Nucleoid-associated protein CLH_3225 (113 aa).

Residues 1 to 14 show a composition bias toward gly residues; sequence MAKGGFPGGFGGGN. A disordered region spans residues 1–31; sequence MAKGGFPGGFGGGNMNNLMKQAQKLQKQMED.

This sequence belongs to the YbaB/EbfC family. Homodimer.

The protein localises to the cytoplasm. It is found in the nucleoid. In terms of biological role, binds to DNA and alters its conformation. May be involved in regulation of gene expression, nucleoid organization and DNA protection. The chain is Nucleoid-associated protein CLH_3225 from Clostridium botulinum (strain Alaska E43 / Type E3).